The following is a 372-amino-acid chain: MESPAWDATKNDSLPPTLTPAVPPYVKLGLTTVYTIFYLLLFAFVYVQLWLVLHYKHKRFSYQTVFLFLCLLWASLRAVLFSFYFRNFVEANRLGAFTFWLLYCFPVCLQFFTLTLMNLYFARVIYKAKSKYLPELIKYRLPLYLAFLVISLLFLVVNLTCAILVKTDYAETKVIVSIRVAINDTLFVLCAVSLSVCLYKISKMSLAGVYLESKGSSVCQVTCIGVTVILLYTSRACYNLVVLSLSDSRYSSFDYDWYNVSDQADLKCKLGDAGYVVFGIILFIWELFPTSLVVYFFRVRNSAQDMTNPGMVPGFNPRSYFFDNPRRYDSDDDLAWNITPQSLQGSFGPDYFDWGNRNSFGSQTGSLQRDST.

Over Met-1 to Thr-32 the chain is Lumenal. Asn-11 is a glycosylation site (N-linked (GlcNAc...) asparagine). Residues Val-33 to Leu-53 traverse the membrane as a helical segment. Residues His-54 to Thr-64 lie on the Cytoplasmic side of the membrane. A helical transmembrane segment spans residues Val-65–Phe-85. Topologically, residues Arg-86–Arg-93 are lumenal. The chain crosses the membrane as a helical span at residues Leu-94 to Leu-114. The Cytoplasmic segment spans residues Thr-115–Tyr-144. The helical transmembrane segment at Leu-145–Val-165 threads the bilayer. Residues Lys-166–Lys-173 lie on the Lumenal side of the membrane. A helical membrane pass occupies residues Val-174–Leu-194. Residues Ser-195–Thr-222 are Cytoplasmic-facing. Residues Cys-223–Leu-243 traverse the membrane as a helical segment. The Lumenal portion of the chain corresponds to Ser-244–Val-276. N-linked (GlcNAc...) asparagine glycosylation occurs at Asn-259. Residues Val-277–Phe-297 traverse the membrane as a helical segment. The Cytoplasmic portion of the chain corresponds to Arg-298 to Thr-372.

The protein belongs to the GPR137 family.

The protein resides in the lysosome membrane. Lysosomal integral membrane protein that regulates the localization and activity of mTORC1, a signaling complex promoting cell growth in response to growth factors, energy levels, and amino acids. Interacts with Rag GTPases and increases the lysosomial localization and activity of Rag GTPases and thereby regulates mTORC1 translocation and activity in lysosome. Involved in the regulation of lysosomal morphology and autophagy. Also acts as a negative regulator of osteoclast activity. In terms of biological role, also acts as a negative regulator of osteoclast activity. This chain is Integral membrane protein GPR137B (gpr137b), found in Xenopus laevis (African clawed frog).